The chain runs to 132 residues: Small ribosomal subunit protein uS8 (132 aa).

It belongs to the universal ribosomal protein uS8 family. In terms of assembly, part of the 30S ribosomal subunit. Contacts proteins S5 and S12.

Its function is as follows. One of the primary rRNA binding proteins, it binds directly to 16S rRNA central domain where it helps coordinate assembly of the platform of the 30S subunit. The chain is Small ribosomal subunit protein uS8 from Xylella fastidiosa (strain 9a5c).